Consider the following 256-residue polypeptide: DNA repair protein RecO (256 aa).

It belongs to the RecO family.

In terms of biological role, involved in DNA repair and RecF pathway recombination. The polypeptide is DNA repair protein RecO (Delftia acidovorans (strain DSM 14801 / SPH-1)).